We begin with the raw amino-acid sequence, 1898 residues long: Receptor-type tyrosine-protein phosphatase F (1898 aa).

An N-terminal signal peptide occupies residues 1 to 29 (MAPEPAPGRRMVPLVPALVMLGLMAGAHG). Residues 30–1254 (DSKPVFVKVP…QQQEEPEMLW (1225 aa)) are Extracellular-facing. 3 Ig-like C2-type domains span residues 33-123 (PVFV…AKLS), 135-224 (PTID…ANLY), and 232-314 (PRFS…AQVT). C54 and C107 are disulfide-bonded. 68–77 (KKGKKVSSQR) provides a ligand contact to heparin. N-linked (GlcNAc...) asparagine glycosylation is present at N117. C156 and C207 are joined by a disulfide. N250 and N295 each carry an N-linked (GlcNAc...) asparagine glycan. The cysteines at positions 253 and 298 are disulfide-linked. 8 consecutive Fibronectin type-III domains span residues 321–411 (PPID…TGEQ), 416–510 (PPRR…TQQG), 514–604 (QPAD…TAQS), 609–706 (PPQK…TDED), 711–810 (PPRK…TTGA), 811–904 (VPGR…TPED), 909–1001 (FPQN…TMPV), and 1005–1089 (FAKN…TAPD). Residues 693–712 (GPESSPVLVRTDEDVPSGPP) form a disordered region. A glycan (N-linked (GlcNAc...) asparagine) is linked at N721. N941, N957, and N960 each carry an N-linked (GlcNAc...) asparagine glycan. Residues 1255-1275 (VTGPVLAVILIILIVIAILLF) form a helical membrane-spanning segment. Residues 1276 to 1898 (KRKRTHSPSS…YLGSFDHYAT (623 aa)) lie on the Cytoplasmic side of the membrane. S1296 is modified (phosphoserine). 2 Tyrosine-protein phosphatase domains span residues 1343–1598 (FSQE…LLEA) and 1630–1889 (MELE…ALEY). Residues D1507, 1539 to 1545 (CSAGVGR), and Q1583 each bind substrate. C1539 (phosphocysteine intermediate) is an active-site residue. C1830 acts as the Phosphocysteine intermediate in catalysis.

This sequence belongs to the protein-tyrosine phosphatase family. Receptor class 2A subfamily. In terms of assembly, interacts with GRIP1. Interacts with PPFIA1, PPFIA2 and PPFIA3. Interacts with PTPRF. Expressed in the cell of the T lineage but not in cells of any other hemopoietic lineage.

It is found in the membrane. The enzyme catalyses O-phospho-L-tyrosyl-[protein] + H2O = L-tyrosyl-[protein] + phosphate. Possible cell adhesion receptor. It possesses an intrinsic protein tyrosine phosphatase activity (PTPase) and dephosphorylates EPHA2 regulating its activity. This chain is Receptor-type tyrosine-protein phosphatase F (Ptprf), found in Mus musculus (Mouse).